The primary structure comprises 430 residues: MSSVVVVGTQWGDEGKGKITDFLSENAEVIARYQGGNNAGHTIKFNGVTYKLHLIPSGIFYKDKTCVIGNGMVVDPKALVTELAYLHERNVSTDNLRISNRAHVILPYHLKLDAVEEERKGANKIGTTKKGIGPAYMDKAARVGIRIADLLDRDVFEEKLARNLEEKNRLLEKMYDAEGFKIEDILDEYYEYGQQIKQYVCDTSVVLNDALDDGRRVLFEGAQGVMLDIDQGTYPFVTSSNPVAGGVTIGSGVGPTKIQHVVGVSKAYTTRVGDGPFPTELNNEIGDQIREVGREYGTTTGRPRRVGWFDSVVVRHARRVSGITDLSLNSIDVLTGIETLKICVAYKYRGEILEEFPASLKALAECEPVYEEMPGWTEDITGAKSLSDLPENARHYLERVSQLTGIPLSIFSVGPDRSQTNVVRSVYRPN.

GTP-binding positions include 12-18 and 40-42; these read GDEGKGK and GHT. The active-site Proton acceptor is aspartate 13. Mg(2+) is bound by residues aspartate 13 and glycine 40. IMP contacts are provided by residues 13–16, 38–41, threonine 128, arginine 142, glutamine 223, threonine 238, and arginine 302; these read DEGK and NAGH. Histidine 41 functions as the Proton donor in the catalytic mechanism. 298 to 304 lines the substrate pocket; it reads TTTGRPR. GTP is bound by residues arginine 304, 330–332, and 412–414; these read SID and SVG.

Belongs to the adenylosuccinate synthetase family. In terms of assembly, homodimer. Mg(2+) serves as cofactor.

Its subcellular location is the cytoplasm. The enzyme catalyses IMP + L-aspartate + GTP = N(6)-(1,2-dicarboxyethyl)-AMP + GDP + phosphate + 2 H(+). It functions in the pathway purine metabolism; AMP biosynthesis via de novo pathway; AMP from IMP: step 1/2. In terms of biological role, plays an important role in the de novo pathway of purine nucleotide biosynthesis. Catalyzes the first committed step in the biosynthesis of AMP from IMP. The protein is Adenylosuccinate synthetase of Bacillus licheniformis (strain ATCC 14580 / DSM 13 / JCM 2505 / CCUG 7422 / NBRC 12200 / NCIMB 9375 / NCTC 10341 / NRRL NRS-1264 / Gibson 46).